We begin with the raw amino-acid sequence, 196 residues long: ATP-dependent Clp protease proteolytic subunit (196 aa).

The active-site Nucleophile is the S98. H123 is an active-site residue.

The protein belongs to the peptidase S14 family. In terms of assembly, fourteen ClpP subunits assemble into 2 heptameric rings which stack back to back to give a disk-like structure with a central cavity, resembling the structure of eukaryotic proteasomes.

The protein localises to the cytoplasm. It carries out the reaction Hydrolysis of proteins to small peptides in the presence of ATP and magnesium. alpha-casein is the usual test substrate. In the absence of ATP, only oligopeptides shorter than five residues are hydrolyzed (such as succinyl-Leu-Tyr-|-NHMec, and Leu-Tyr-Leu-|-Tyr-Trp, in which cleavage of the -Tyr-|-Leu- and -Tyr-|-Trp bonds also occurs).. Cleaves peptides in various proteins in a process that requires ATP hydrolysis. Has a chymotrypsin-like activity. Plays a major role in the degradation of misfolded proteins. This chain is ATP-dependent Clp protease proteolytic subunit, found in Geobacillus thermodenitrificans (strain NG80-2).